The primary structure comprises 110 residues: Large ribosomal subunit protein uL22 (110 aa).

This sequence belongs to the universal ribosomal protein uL22 family. In terms of assembly, part of the 50S ribosomal subunit.

Functionally, this protein binds specifically to 23S rRNA; its binding is stimulated by other ribosomal proteins, e.g. L4, L17, and L20. It is important during the early stages of 50S assembly. It makes multiple contacts with different domains of the 23S rRNA in the assembled 50S subunit and ribosome. In terms of biological role, the globular domain of the protein is located near the polypeptide exit tunnel on the outside of the subunit, while an extended beta-hairpin is found that lines the wall of the exit tunnel in the center of the 70S ribosome. This Alkaliphilus metalliredigens (strain QYMF) protein is Large ribosomal subunit protein uL22.